A 636-amino-acid chain; its full sequence is Biosynthetic arginine decarboxylase (636 aa).

Lys-110 carries the post-translational modification N6-(pyridoxal phosphate)lysine. 290–300 (IDVGGGLGVDY) serves as a coordination point for substrate.

This sequence belongs to the Orn/Lys/Arg decarboxylase class-II family. SpeA subfamily. The cofactor is Mg(2+). Pyridoxal 5'-phosphate serves as cofactor.

It catalyses the reaction L-arginine + H(+) = agmatine + CO2. Functionally, catalyzes the biosynthesis of agmatine from arginine. This chain is Biosynthetic arginine decarboxylase, found in Pseudomonas aeruginosa (strain ATCC 15692 / DSM 22644 / CIP 104116 / JCM 14847 / LMG 12228 / 1C / PRS 101 / PAO1).